The sequence spans 420 residues: Innexin-3 (420 aa).

The next 4 helical transmembrane spans lie at 33–53 (ATLL…GSAI), 104–124 (WVPI…WIWS), 193–213 (MLYI…FIIL), and 278–298 (IYLF…INTL). A disordered region spans residues 378 to 405 (NRDFHHGHSTKSTSPGLEEGHHEHLYTP). Basic and acidic residues predominate over residues 395–405 (EEGHHEHLYTP).

This sequence belongs to the pannexin family. Interacts with F-actin. In terms of tissue distribution, evenly distributed along the adjoining membranes of the two pm5 pharyngeal muscle cells.

Its subcellular location is the cell membrane. The protein localises to the cell junction. It is found in the gap junction. Its function is as follows. Structural component of gap junctions. Plays a role in maintaining gap junction activity to promote phayngeal muscle contraction. The polypeptide is Innexin-3 (Caenorhabditis elegans).